The chain runs to 304 residues: MLDVCLLGTSGMLPLPGRWLTSLMTRYNGSSLMIDCGEGTQIAVKQKGWSFNPIDVICFTHYHADHISGLPGLLLTIGNSDRKKPLTLVGPKGLGRVVSSLRVIAPELPFELKFIELTNQQEHLSICGYEIDAFRVNHAVICYGYSISIPRIGKFDVEKAKELGIPCSMWNKLQHGTAVTIDDKEYTPDMVMGAARKGLKVTYCTDSRPVQIISDNAKESDLFICEGMYGEDGKEAKAKEYKHMTFTEAAQLAKNADVREMWLTHYSPSLVRPQDYVDKARKIFPATIAANDGRTVELKFDDEG.

Positions 61, 63, 65, 66, 138, 206, and 265 each coordinate Zn(2+). Catalysis depends on aspartate 65, which acts as the Proton acceptor.

Belongs to the RNase Z family. As to quaternary structure, homodimer. Requires Zn(2+) as cofactor.

It catalyses the reaction Endonucleolytic cleavage of RNA, removing extra 3' nucleotides from tRNA precursor, generating 3' termini of tRNAs. A 3'-hydroxy group is left at the tRNA terminus and a 5'-phosphoryl group is left at the trailer molecule.. Functionally, zinc phosphodiesterase, which displays some tRNA 3'-processing endonuclease activity. Probably involved in tRNA maturation, by removing a 3'-trailer from precursor tRNA. In Lachnospira eligens (strain ATCC 27750 / DSM 3376 / VPI C15-48 / C15-B4) (Eubacterium eligens), this protein is Ribonuclease Z.